We begin with the raw amino-acid sequence, 500 residues long: Protein shisa-6 (500 aa).

Positions 1 to 25 (MALRRLLLLLLLSLESLDLLPSVHG) are cleaved as a signal peptide. Residues 26–174 (ARGRAANRTL…NKYDPEKDKT (149 aa)) lie on the Extracellular side of the membrane. N-linked (GlcNAc...) asparagine glycosylation is found at N32 and N59. The tract at residues 52–73 (ARGGRELNGTARAPGIPEAGSR) is disordered. Residues 175–195 (NFTVYITCGVIAFVIVAGVFA) form a helical membrane-spanning segment. The Cytoplasmic segment spans residues 196–500 (KVSYDKAHRP…YTASKTEVTV (305 aa)). Polar residues predominate over residues 240–255 (TSPKENTPVRSSSKNH). 2 disordered regions span residues 240–269 (TSPK…PEKP) and 349–378 (SQQK…DRGL). S391, S397, and S409 each carry phosphoserine. At T433 the chain carries Phosphothreonine. The disordered stretch occupies residues 444 to 470 (MHSHPSASNNSYATLGQSQTAAKRHAF). The span at 448–464 (PSASNNSYATLGQSQTA) shows a compositional bias: polar residues. T477 bears the Phosphothreonine mark. A PDZ-binding motif is present at residues 497–500 (EVTV).

This sequence belongs to the shisa family. In terms of assembly, component of the postsynaptic hippocampal AMPA-type glutamate receptor (AMPAR) complex, at least composed of pore forming AMPAR subunits GRIA1, GRIA2 and GRIA3 and AMPAR auxiliary proteins SHISA6 and SHISA7. Interacts (via PDZ-binding motif) with DLG4/PSD-95 (via PDZ domain); the interaction is direct. Expressed in the developing ventral mesencephalon.

The protein resides in the membrane. It is found in the postsynaptic density. Its function is as follows. Involved in maintenance of high-frequency synaptic transmission at hippocampal CA3-CA1 synapses. Regulates AMPA-type glutamate receptor (AMPAR) immobilization at postsynaptic density keeping the channels in an activated state in the presence of glutamate and preventing synaptic depression. May play a role in self-renewal and differentiation of spermatogonial stem cells by inhibiting canonical Wnt signaling pathway. The sequence is that of Protein shisa-6 from Homo sapiens (Human).